The chain runs to 364 residues: 3-dehydroquinate synthase (364 aa).

Residues 71 to 76 (DGEQYK), 105 to 109 (GVIGD), 129 to 130 (TT), Lys142, Lys151, and 169 to 172 (CLKT) each bind NAD(+). Zn(2+) is bound by residues Glu184, His247, and His264.

This sequence belongs to the sugar phosphate cyclases superfamily. Dehydroquinate synthase family. It depends on Co(2+) as a cofactor. Zn(2+) is required as a cofactor. Requires NAD(+) as cofactor.

The protein localises to the cytoplasm. The catalysed reaction is 7-phospho-2-dehydro-3-deoxy-D-arabino-heptonate = 3-dehydroquinate + phosphate. Its pathway is metabolic intermediate biosynthesis; chorismate biosynthesis; chorismate from D-erythrose 4-phosphate and phosphoenolpyruvate: step 2/7. Its function is as follows. Catalyzes the conversion of 3-deoxy-D-arabino-heptulosonate 7-phosphate (DAHP) to dehydroquinate (DHQ). The polypeptide is 3-dehydroquinate synthase (Klebsiella pneumoniae (strain 342)).